A 309-amino-acid chain; its full sequence is Coproporphyrin III ferrochelatase (309 aa).

Residues Y12, R29, 45 to 46 (RY), S53, and Y124 each bind Fe-coproporphyrin III. H182 and E263 together coordinate Fe(2+).

This sequence belongs to the ferrochelatase family.

It localises to the cytoplasm. The enzyme catalyses Fe-coproporphyrin III + 2 H(+) = coproporphyrin III + Fe(2+). Its pathway is porphyrin-containing compound metabolism; protoheme biosynthesis. In terms of biological role, involved in coproporphyrin-dependent heme b biosynthesis. Catalyzes the insertion of ferrous iron into coproporphyrin III to form Fe-coproporphyrin III. The chain is Coproporphyrin III ferrochelatase from Listeria innocua serovar 6a (strain ATCC BAA-680 / CLIP 11262).